Consider the following 342-residue polypeptide: MTNILSPEKSENDQELPIRPSYLQEFVGQQQIKENLSVFIKAAKSRNEHLDHTLFYGPPGLGKTTLAKIISNEIGGNFKSTSGPAILKVADLAAILTNLEKNDVLFIDEIHRLNTAVEEVLYPAMEDFELDIIIGEGSAARSVKITLPKFTLIGATTRLGLLSNPLRDRFGIPMRLNFYNTEELKKVLNRASKLLDIDLTDSGSEEIAKRSRGTPRIALRLLRRIRDFAAVEGKSRVDKEVSDFGLNRLEVDRIGLDSNDYRYLKFIADNYNGGPVGIETIAAALSEQRDALEETIEPYLIQIGLLQRTPRGRVITIAAFEHLKMSVPNQSHHQFNIFNENE.

The segment at 1-179 (MTNILSPEKS…FGIPMRLNFY (179 aa)) is large ATPase domain (RuvB-L). Residues Ile-18, Arg-19, Gly-60, Lys-63, Thr-64, Thr-65, 126–128 (EDF), Arg-169, Tyr-179, and Arg-216 each bind ATP. A Mg(2+)-binding site is contributed by Thr-64. Positions 180–250 (NTEELKKVLN…VSDFGLNRLE (71 aa)) are small ATPAse domain (RuvB-S). The segment at 253-342 (RIGLDSNDYR…HQFNIFNENE (90 aa)) is head domain (RuvB-H). DNA-binding residues include Arg-289, Arg-308, and Arg-313.

The protein belongs to the RuvB family. Homohexamer. Forms an RuvA(8)-RuvB(12)-Holliday junction (HJ) complex. HJ DNA is sandwiched between 2 RuvA tetramers; dsDNA enters through RuvA and exits via RuvB. An RuvB hexamer assembles on each DNA strand where it exits the tetramer. Each RuvB hexamer is contacted by two RuvA subunits (via domain III) on 2 adjacent RuvB subunits; this complex drives branch migration. In the full resolvosome a probable DNA-RuvA(4)-RuvB(12)-RuvC(2) complex forms which resolves the HJ.

It is found in the cytoplasm. It carries out the reaction ATP + H2O = ADP + phosphate + H(+). The RuvA-RuvB-RuvC complex processes Holliday junction (HJ) DNA during genetic recombination and DNA repair, while the RuvA-RuvB complex plays an important role in the rescue of blocked DNA replication forks via replication fork reversal (RFR). RuvA specifically binds to HJ cruciform DNA, conferring on it an open structure. The RuvB hexamer acts as an ATP-dependent pump, pulling dsDNA into and through the RuvAB complex. RuvB forms 2 homohexamers on either side of HJ DNA bound by 1 or 2 RuvA tetramers; 4 subunits per hexamer contact DNA at a time. Coordinated motions by a converter formed by DNA-disengaged RuvB subunits stimulates ATP hydrolysis and nucleotide exchange. Immobilization of the converter enables RuvB to convert the ATP-contained energy into a lever motion, pulling 2 nucleotides of DNA out of the RuvA tetramer per ATP hydrolyzed, thus driving DNA branch migration. The RuvB motors rotate together with the DNA substrate, which together with the progressing nucleotide cycle form the mechanistic basis for DNA recombination by continuous HJ branch migration. Branch migration allows RuvC to scan DNA until it finds its consensus sequence, where it cleaves and resolves cruciform DNA. The protein is Holliday junction branch migration complex subunit RuvB of Rickettsia rickettsii (strain Sheila Smith).